The chain runs to 476 residues: tRNA (cytosine(72)-C(5))-methyltransferase NSUN6 (476 aa).

A PUA domain is found at 111–203 (QGEVIVGAQC…IGIRMTEPIY (93 aa)). S-adenosyl-L-methionine is bound by residues 242-248 (CAAPGGK), aspartate 266, aspartate 293, and aspartate 323. The active-site Nucleophile is cysteine 373. The residue at position 419 (lysine 419) is an N6-acetyllysine.

Belongs to the class I-like SAM-binding methyltransferase superfamily. RsmB/NOP family.

It is found in the cytoplasm. The enzyme catalyses cytidine(72) in tRNA(Thr) + S-adenosyl-L-methionine = 5-methylcytidine(72) in tRNA(Thr) + S-adenosyl-L-homocysteine + H(+). It carries out the reaction cytidine(72) in tRNA(Cys) + S-adenosyl-L-methionine = 5-methylcytidine(72) in tRNA(Cys) + S-adenosyl-L-homocysteine + H(+). Functionally, S-adenosyl-L-methionine-dependent methyltransferase that specifically methylates the C5 position of cytosine 72 in tRNA(Thr)(TGT) and tRNA(Cys)(GCA). In vitro also methylates tRNA(Thr)(AGT). Methylation requires, in the acceptor stem region, the presence of the 3'-CCA terminus, the target site C72, the discriminator base U73, and the second and third base pairs (2:71 and 3:70) in the tRNA substrates. This Mus musculus (Mouse) protein is tRNA (cytosine(72)-C(5))-methyltransferase NSUN6.